Consider the following 880-residue polypeptide: Phosphoinositide 3-kinase regulatory subunit 5 (880 aa).

Position 1 is an N-acetylmethionine (M1). A heterodimerization region spans residues 25 to 101 (SLSRRSTSWS…TPHFPPDSDL (77 aa)). 4 disordered regions span residues 315–339 (GILG…TDGH), 389–416 (SGYV…GHRR), 454–510 (RRAG…SGDE), and 565–601 (HGTS…TPWE). Residues 318–335 (GDDEEEEEEEEEVEEDLE) show a composition bias toward acidic residues. Residues S458 and S507 each carry the phosphoserine modification. Positions 571 to 585 (ACPPPRSQTPSPPTD) are enriched in pro residues. An interaction with beta-gamma G protein dimers region spans residues 653–753 (PILADMLLYY…WSNLEKVCTS (101 aa)).

Heterodimer of a catalytic subunit (PIK3CG/p120) and a regulatory (PIK3R5a/p101) subunit. Interacts with beta-gamma G protein dimers. In terms of tissue distribution, ubiquitously expressed with high expression in fetal brain compared to adult brain. Abundant expression is observed in cerebellum, cerebral cortex, cerebral meninges, and vermis cerebelli.

Its subcellular location is the nucleus. It localises to the cytoplasm. The protein localises to the cell membrane. With respect to regulation, greatly activated by G gamma proteins. Functionally, regulatory subunit of the PI3K gamma complex. Required for recruitment of the catalytic subunit to the plasma membrane via interaction with beta-gamma G protein dimers. Required for G protein-mediated activation of PIK3CG. The sequence is that of Phosphoinositide 3-kinase regulatory subunit 5 (PIK3R5) from Homo sapiens (Human).